Reading from the N-terminus, the 912-residue chain is Protein SLFN14 (912 aa).

The required for endoribonuclease activity stretch occupies residues 206–391 (ESTHVEFKRF…KVHKFKEALQ (186 aa)). The interval 392-571 (RHLFPVTQEE…QMGCEFFNLL (180 aa)) is required for ribosome binding. Residue 593–600 (CFPGVRKT) coordinates ATP.

It belongs to the Schlafen family. Subgroup III subfamily. As to quaternary structure, associates with ribosomes in an ATP-independent manner. It depends on Mg(2+) as a cofactor. Mn(2+) is required as a cofactor. As to expression, expressed in megakaryocytes and platelets (at protein level). Weakly expressed in melanocytes and malignant melanoma cells.

It is found in the nucleus. Its function is as follows. Shows no ribosome-associated and endoribonuclease activities. Displays polysome-associated endoribonuclease activity towards mRNAs and rRNAs. May play a role in RNA surveillance pathways by recognizing stalled ribosomes and triggering endonucleolytic cleavage of aberrant mRNAs. Cleaves different types of rRNAs and mRNAs in a magnesium- and manganese-dependent and ATP-independent manner. Involved in correct maturation of megakaryocytes and especially important for proplatelet extension. This is Protein SLFN14 from Homo sapiens (Human).